The sequence spans 679 residues: MDSSSSSNYFSVGSTNPSAVVLLYSKELKKWDEFEDILEERRHVSDLKFAMKCYTPLVYKGITPCKPSDIKNSVLNSEEIHYVIKQLSMESLQSVDVLREEVCEILDEMSHKLRLGAIRFFAFALSKIFKQIFSKVCVNEEGIQKLQRAIQEHPVVLLPSHRSYIDFLMLSFLLYNYDLPVPVIAAGMDFLGMKMIGELLRMSGAFFMRRTFGGNKLYWAVFSEYVKTMLRNGYAPVEFFLEGTRSRSAKTLTPKFGLLSIVMEPFFKREVFDTYLVPISISYDKILEETLYAYELLGVPKPKESTTGLLKARRILSENFGSIYVYFGDPVSLRSLASGRMSRSPYNLVPRYIPQKQSEDMHAFVTEVAYKMQLLQIENLVLSPWPLIVAVLLQNRPSMDFDALLEKTLWLKGLTQAFGGFLIWPDNEPAEEVVQHHILLHSNIASLVKDQVILKLESGDSEVVDGLIFQHITLLTCSTYRNQLLNIFVRPSLVAVALQMTPGFRKEDVYSAFRFLRDVFSDEFIFFPGNTVKDFEEGCYLLCKSETIQMTTRDILVTEKGNAVLEFLIGLFRPFVECYKLLCIYLLKEEEEHFTEKQYLAAVRKFTSQLLNQGASQCYDVLSSDVQKNALAAFVRLGVVEKKKVNNDYIFSVNEPATTKLEEMLGCKIPIGKPATAKL.

Phosphoserine is present on S11. An HXXXXD motif motif is present at residues 161–166; that stretch reads HRSYID. At K642 the chain carries N6-acetyllysine.

It belongs to the GPAT/DAPAT family. Part of a heterotrimeric complex composed of GNPAT, AGPS and a modified form of GNPAT.

The protein localises to the peroxisome membrane. It catalyses the reaction dihydroxyacetone phosphate + an acyl-CoA = a 1-acylglycerone 3-phosphate + CoA. The catalysed reaction is dihydroxyacetone phosphate + hexadecanoyl-CoA = 1-hexadecanoylglycerone 3-phosphate + CoA. Its pathway is membrane lipid metabolism; glycerophospholipid metabolism. In terms of biological role, dihydroxyacetonephosphate acyltransferase catalyzing the first step in the biosynthesis of plasmalogens, a subset of phospholipids that differ from other glycerolipids by having an alkyl chain attached through a vinyl ether linkage at the sn-1 position of the glycerol backbone, and which unique physical properties have an impact on various aspects of cell signaling and membrane biology. This is Dihydroxyacetone phosphate acyltransferase from Oryctolagus cuniculus (Rabbit).